The sequence spans 938 residues: Isoleucine--tRNA ligase (938 aa).

The short motif at 58 to 68 is the 'HIGH' region element; that stretch reads PYANGSIHIGH. Position 183 is an N6-acetyllysine (Lys183). Glu561 contacts L-isoleucyl-5'-AMP. Residues 602-606 carry the 'KMSKS' region motif; that stretch reads KMSKS. Position 605 (Lys605) interacts with ATP. The Zn(2+) site is built by Cys901, Cys904, Cys921, and Cys924.

This sequence belongs to the class-I aminoacyl-tRNA synthetase family. IleS type 1 subfamily. In terms of assembly, monomer. The cofactor is Zn(2+).

The protein resides in the cytoplasm. The enzyme catalyses tRNA(Ile) + L-isoleucine + ATP = L-isoleucyl-tRNA(Ile) + AMP + diphosphate. In terms of biological role, catalyzes the attachment of isoleucine to tRNA(Ile). As IleRS can inadvertently accommodate and process structurally similar amino acids such as valine, to avoid such errors it has two additional distinct tRNA(Ile)-dependent editing activities. One activity is designated as 'pretransfer' editing and involves the hydrolysis of activated Val-AMP. The other activity is designated 'posttransfer' editing and involves deacylation of mischarged Val-tRNA(Ile). This chain is Isoleucine--tRNA ligase, found in Escherichia coli O6:K15:H31 (strain 536 / UPEC).